A 541-amino-acid chain; its full sequence is CTP synthase (541 aa).

Positions 1–271 (MVGKLNPTRF…DTQILKHFDV (271 aa)) are amidoligase domain. Residue S19 coordinates CTP. Residue S19 coordinates UTP. Residues 20–25 (SLGKGL) and D77 each bind ATP. Mg(2+)-binding residues include D77 and E145. Residues 152-154 (DIE), 192-197 (KTKPTQ), and K228 each bind CTP. Residues 192 to 197 (KTKPTQ) and K228 each bind UTP. Positions 296–537 (VIAIVGKYVT…VTSTLQVKKA (242 aa)) constitute a Glutamine amidotransferase type-1 domain. Position 355 (G355) interacts with L-glutamine. C382 serves as the catalytic Nucleophile; for glutamine hydrolysis. Residues 383 to 386 (LGMQ), E406, and R465 contribute to the L-glutamine site. Residues H510 and E512 contribute to the active site.

This sequence belongs to the CTP synthase family. In terms of assembly, homotetramer.

It catalyses the reaction UTP + L-glutamine + ATP + H2O = CTP + L-glutamate + ADP + phosphate + 2 H(+). The catalysed reaction is L-glutamine + H2O = L-glutamate + NH4(+). The enzyme catalyses UTP + NH4(+) + ATP = CTP + ADP + phosphate + 2 H(+). It functions in the pathway pyrimidine metabolism; CTP biosynthesis via de novo pathway; CTP from UDP: step 2/2. Its activity is regulated as follows. Allosterically activated by GTP, when glutamine is the substrate; GTP has no effect on the reaction when ammonia is the substrate. The allosteric effector GTP functions by stabilizing the protein conformation that binds the tetrahedral intermediate(s) formed during glutamine hydrolysis. Inhibited by the product CTP, via allosteric rather than competitive inhibition. In terms of biological role, catalyzes the ATP-dependent amination of UTP to CTP with either L-glutamine or ammonia as the source of nitrogen. Regulates intracellular CTP levels through interactions with the four ribonucleotide triphosphates. In Anaplasma phagocytophilum (strain HZ), this protein is CTP synthase.